A 332-amino-acid polypeptide reads, in one-letter code: Adenosine receptor A2b (332 aa).

The Extracellular segment spans residues 1 to 8 (MPLEAQDA). A helical transmembrane segment spans residues 9–33 (VYVALELALAALSVTGNVLVCAAVG). Residues 34-43 (TSSALQTPTN) lie on the Cytoplasmic side of the membrane. The chain crosses the membrane as a helical span at residues 44 to 67 (YFLVSLAAADVAVGLFAIPFAVTI). Residues 68-78 (SLGFCTDFHSC) are Extracellular-facing. Cys78 and Cys170 are joined by a disulfide. Residues 79 to 101 (LFLACFVLVLTQSSIFSLLAVAV) form a helical membrane-spanning segment. At 102–121 (DRYLAVRVPLRYKSLVTGAR) the chain is on the cytoplasmic side. Residues 122–144 (ARGVIAALWVLAFGIGLTPFLGW) traverse the membrane as a helical segment. Over 145–177 (NDRKIATNCTEPGDAATNVSCCLIRCLFENVVP) the chain is Extracellular. Asn152 and Asn162 each carry an N-linked (GlcNAc...) asparagine glycan. Residue Glu173 participates in adenosine binding. A helical membrane pass occupies residues 178–202 (MSYMVYFNFFGCVLPPLLIMLVIYV). At 203–234 (KIFLVACRQLQRTELMDHSRTVLQREIHAAKS) the chain is on the cytoplasmic side. A helical membrane pass occupies residues 235-258 (LALIVGIFALCWLPVHTINCASLF). Residue Asn253 participates in adenosine binding. At 259 to 266 (QPTWAKVK) the chain is on the extracellular side. A helical membrane pass occupies residues 267-290 (PKWAINTAILLSHANSAVNPIVYA). Ser278 and His279 together coordinate adenosine. The Cytoplasmic portion of the chain corresponds to 291-332 (YRNRDFRYTFHKIISRYILCRTHILKSGEGQVGSQPTLQLGL). Cys310 carries the S-palmitoyl cysteine lipid modification.

This sequence belongs to the G-protein coupled receptor 1 family.

The protein localises to the cell membrane. Receptor for adenosine. The activity of this receptor is mediated by G proteins which activate adenylyl cyclase. This Bos taurus (Bovine) protein is Adenosine receptor A2b (ADORA2B).